The chain runs to 316 residues: Probable 5-dehydro-4-deoxyglucarate dehydratase (316 aa).

This sequence belongs to the DapA family.

The catalysed reaction is 5-dehydro-4-deoxy-D-glucarate + H(+) = 2,5-dioxopentanoate + CO2 + H2O. It participates in carbohydrate acid metabolism; D-glucarate degradation; 2,5-dioxopentanoate from D-glucarate: step 2/2. The polypeptide is Probable 5-dehydro-4-deoxyglucarate dehydratase (Corynebacterium glutamicum (strain R)).